We begin with the raw amino-acid sequence, 397 residues long: MTLLDPFFGEFGGMYSPQILMPVLLELEKAFVDAKDDPEFQAEFQHLLTEYAGRPTPLTLCRNLTKGTKTKIYLKREDLLHGGAHKTNQVLGQALLAKRMGKTRIIAETGAGQHGVATALACALLDLPCRIYMGAVDCERQKPNVFRMRLMGAEVIPVHAGSSTLKDACNEAMRDWTANYKDTHYILGTAAGPHPFPTIVREFQRMIGEEAKEQILKAEGRLPDAVVACVGGGSNAIGMFATFIEEEGVRLIGVEPAGHGIETGKHGAPIGHARKGIYLGMVSFLMQNEDGQVEESHSISAGLDFPSVGPQHAYLSSIGRAQYPSVTDQEALDAFQELSLREGIIPALESSHALAHALKMARSEPEKEQILIVNLSGRGDKDIFTVANALEGEGALS.

An N6-(pyridoxal phosphate)lysine modification is found at K86.

It belongs to the TrpB family. In terms of assembly, tetramer of two alpha and two beta chains. Pyridoxal 5'-phosphate is required as a cofactor.

It catalyses the reaction (1S,2R)-1-C-(indol-3-yl)glycerol 3-phosphate + L-serine = D-glyceraldehyde 3-phosphate + L-tryptophan + H2O. It functions in the pathway amino-acid biosynthesis; L-tryptophan biosynthesis; L-tryptophan from chorismate: step 5/5. Functionally, the beta subunit is responsible for the synthesis of L-tryptophan from indole and L-serine. The sequence is that of Tryptophan synthase beta chain from Tolumonas auensis (strain DSM 9187 / NBRC 110442 / TA 4).